The following is an 804-amino-acid chain: Leucine--tRNA ligase (804 aa).

The short motif at 40 to 51 (PYPSGAGLHVGH) is the 'HIGH' region element. A 'KMSKS' region motif is present at residues 576-580 (KMSKS). Lysine 579 lines the ATP pocket.

It belongs to the class-I aminoacyl-tRNA synthetase family.

Its subcellular location is the cytoplasm. The catalysed reaction is tRNA(Leu) + L-leucine + ATP = L-leucyl-tRNA(Leu) + AMP + diphosphate. This is Leucine--tRNA ligase from Staphylococcus aureus (strain bovine RF122 / ET3-1).